The primary structure comprises 99 residues: MELVDPNLDPWNHPGSQPTTPCTRCYCKWCCFHCYWCFTTKGLGISYGRKKRRQRPRTPQSSQIHQDFVPKQPISQARGNPTGPKESKKEVESKAKTDP.

A disordered region spans residues 1-20 (MELVDPNLDPWNHPGSQPTT). The segment at 1–24 (MELVDPNLDPWNHPGSQPTTPCTR) is interaction with human CREBBP. A transactivation region spans residues 1 to 48 (MELVDPNLDPWNHPGSQPTTPCTRCYCKWCCFHCYWCFTTKGLGISYG). Residues Cys-22, Cys-25, and Cys-27 each contribute to the Zn(2+) site. Positions 22-37 (CTRCYCKWCCFHCYWC) are cysteine-rich. Residue Lys-28 is modified to N6-acetyllysine; by host PCAF. Zn(2+)-binding residues include Cys-30, His-33, Cys-34, and Cys-37. The core stretch occupies residues 38–48 (FTTKGLGISYG). Positions 48-99 (GRKKRRQRPRTPQSSQIHQDFVPKQPISQARGNPTGPKESKKEVESKAKTDP) are disordered. The short motif at 49–57 (RKKRRQRPR) is the Nuclear localization signal, RNA-binding (TAR), and protein transduction element. The interval 49–86 (RKKRRQRPRTPQSSQIHQDFVPKQPISQARGNPTGPKE) is interaction with the host capping enzyme RNGTT. An N6-acetyllysine; by host EP300 and GCN5L2 mark is found at Lys-50 and Lys-51. 2 positions are modified to asymmetric dimethylarginine; by host PRMT6: Arg-52 and Arg-53. Residue Lys-71 forms a Glycyl lysine isopeptide (Lys-Gly) (interchain with G-Cter in ubiquitin) linkage. The segment covering 85–99 (KESKKEVESKAKTDP) has biased composition (basic and acidic residues).

The protein belongs to the lentiviruses Tat family. In terms of assembly, interacts with host CCNT1. Associates with the P-TEFb complex composed at least of Tat, P-TEFb (CDK9 and CCNT1), TAR RNA, RNA Pol II. Recruits the HATs CREBBP, TAF1/TFIID, EP300, PCAF and GCN5L2. Interacts with host KAT5/Tip60; this interaction targets the latter to degradation. Interacts with the host deacetylase SIRT1. Interacts with host capping enzyme RNGTT; this interaction stimulates RNGTT. Binds to host KDR, and to the host integrins ITGAV/ITGB3 and ITGA5/ITGB1. Interacts with host KPNB1/importin beta-1 without previous binding to KPNA1/importin alpha-1. Interacts with EIF2AK2. Interacts with host nucleosome assembly protein NAP1L1; this interaction may be required for the transport of Tat within the nucleus, since the two proteins interact at the nuclear rim. Interacts with host C1QBP/SF2P32; this interaction involves lysine-acetylated Tat. Interacts with the host chemokine receptors CCR2, CCR3 and CXCR4. Interacts with host DPP4/CD26; this interaction may trigger an anti-proliferative effect. Interacts with host LDLR. Interacts with the host extracellular matrix metalloproteinase MMP1. Interacts with host PRMT6; this interaction mediates Tat's methylation. Interacts with, and is ubiquitinated by MDM2/Hdm2. Interacts with host PSMC3 and HTATIP2. Interacts with STAB1; this interaction may overcome SATB1-mediated repression of IL2 and IL2RA (interleukin) in T cells by binding to the same domain than HDAC1. Interacts (when acetylated) with human CDK13, thereby increasing HIV-1 mRNA splicing and promoting the production of the doubly spliced HIV-1 protein Nef. Interacts with host TBP; this interaction modulates the activity of transcriptional pre-initiation complex. Interacts with host RELA. Interacts with host PLSCR1; this interaction negatively regulates Tat transactivation activity by altering its subcellular distribution. Post-translationally, asymmetrical arginine methylation by host PRMT6 seems to diminish the transactivation capacity of Tat and affects the interaction with host CCNT1. Acetylation by EP300, CREBBP, GCN5L2/GCN5 and PCAF regulates the transactivation activity of Tat. EP300-mediated acetylation of Lys-50 promotes dissociation of Tat from the TAR RNA through the competitive binding to PCAF's bromodomain. In addition, the non-acetylated Tat's N-terminus can also interact with PCAF. PCAF-mediated acetylation of Lys-28 enhances Tat's binding to CCNT1. Lys-50 is deacetylated by SIRT1. In terms of processing, polyubiquitination by host MDM2 does not target Tat to degradation, but activates its transactivation function and fosters interaction with CCNT1 and TAR RNA. Post-translationally, phosphorylated by EIF2AK2 on serine and threonine residues adjacent to the basic region important for TAR RNA binding and function. Phosphorylation of Tat by EIF2AK2 is dependent on the prior activation of EIF2AK2 by dsRNA.

It is found in the host nucleus. It localises to the host nucleolus. The protein resides in the host cytoplasm. Its subcellular location is the secreted. In terms of biological role, transcriptional activator that increases RNA Pol II processivity, thereby increasing the level of full-length viral transcripts. Recognizes a hairpin structure at the 5'-LTR of the nascent viral mRNAs referred to as the transactivation responsive RNA element (TAR) and recruits the cyclin T1-CDK9 complex (P-TEFb complex) that will in turn hyperphosphorylate the RNA polymerase II to allow efficient elongation. The CDK9 component of P-TEFb and other Tat-activated kinases hyperphosphorylate the C-terminus of RNA Pol II that becomes stabilized and much more processive. Other factors such as HTATSF1/Tat-SF1, SUPT5H/SPT5, and HTATIP2 are also important for Tat's function. Besides its effect on RNA Pol II processivity, Tat induces chromatin remodeling of proviral genes by recruiting the histone acetyltransferases (HATs) CREBBP, EP300 and PCAF to the chromatin. This also contributes to the increase in proviral transcription rate, especially when the provirus integrates in transcriptionally silent region of the host genome. To ensure maximal activation of the LTR, Tat mediates nuclear translocation of NF-kappa-B by interacting with host RELA. Through its interaction with host TBP, Tat may also modulate transcription initiation. Tat can reactivate a latently infected cell by penetrating in it and transactivating its LTR promoter. In the cytoplasm, Tat is thought to act as a translational activator of HIV-1 mRNAs. Its function is as follows. Extracellular circulating Tat can be endocytosed by surrounding uninfected cells via the binding to several surface receptors such as CD26, CXCR4, heparan sulfate proteoglycans (HSPG) or LDLR. Neurons are rarely infected, but they internalize Tat via their LDLR. Through its interaction with nuclear HATs, Tat is potentially able to control the acetylation-dependent cellular gene expression. Modulates the expression of many cellular genes involved in cell survival, proliferation or in coding for cytokines or cytokine receptors. Tat plays a role in T-cell and neurons apoptosis. Tat induced neurotoxicity and apoptosis probably contribute to neuroAIDS. Circulating Tat also acts as a chemokine-like and/or growth factor-like molecule that binds to specific receptors on the surface of the cells, affecting many cellular pathways. In the vascular system, Tat binds to ITGAV/ITGB3 and ITGA5/ITGB1 integrins dimers at the surface of endothelial cells and competes with bFGF for heparin-binding sites, leading to an excess of soluble bFGF. In Homo sapiens (Human), this protein is Protein Tat.